An 864-amino-acid chain; its full sequence is Leucine--tRNA ligase (864 aa).

The 'HIGH' region motif lies at 42 to 52 (PYPSGKLHMGH). Residues 624 to 628 (KMSKS) carry the 'KMSKS' region motif. Lys627 contacts ATP.

This sequence belongs to the class-I aminoacyl-tRNA synthetase family.

It is found in the cytoplasm. The enzyme catalyses tRNA(Leu) + L-leucine + ATP = L-leucyl-tRNA(Leu) + AMP + diphosphate. The polypeptide is Leucine--tRNA ligase (Burkholderia multivorans (strain ATCC 17616 / 249)).